A 1461-amino-acid polypeptide reads, in one-letter code: Autotransporter adhesin SadA (1461 aa).

Positions 1 to 54 (MNRIFKVLWNAATGTFVVTSETAKSRGKKNGRRKLAVSALIGLSSIMVSADALA) are cleaved as a signal peptide. Residues 55-1372 (NAGNDTGDGV…EEANTYTDQK (1318 aa)) form a surface exposed passenger domain region. The tract at residues 1373–1461 (MGEMNSKIKG…SAAIGAGFQW (89 aa)) is translocator domain. A run of 4 beta stranded transmembrane segments spans residues 1407 to 1417 (GANMTSIAGGT), 1421 to 1431 (ESAVAIGVSMV), 1440 to 1446 (KLQGTSN), and 1450 to 1461 (DYSAAIGAGFQW).

This sequence belongs to the autotransporter-2 (AT-2) (TC 1.B.40) family. Homotrimer.

The protein resides in the cell surface. The protein localises to the cell outer membrane. Its function is as follows. Involved in cell aggregation, biofilm formation, and adhesion to human intestinal epithelial cells. In Salmonella typhimurium (strain LT2 / SGSC1412 / ATCC 700720), this protein is Autotransporter adhesin SadA.